Consider the following 37-residue polypeptide: Large ribosomal subunit protein bL36c (37 aa).

Belongs to the bacterial ribosomal protein bL36 family.

The protein localises to the plastid. The polypeptide is Large ribosomal subunit protein bL36c (Helicosporidium sp. subsp. Simulium jonesii (Green alga)).